The chain runs to 72 residues: Long neurotoxin OH-5 (72 aa).

5 cysteine pairs are disulfide-bonded: C3–C22, C15–C43, C28–C32, C47–C58, and C59–C64.

It belongs to the three-finger toxin family. Long-chain subfamily. Type II alpha-neurotoxin sub-subfamily. As to expression, expressed by the venom gland.

It localises to the secreted. Its function is as follows. Binds with high affinity to muscular (alpha-1/CHRNA1) and neuronal (alpha-7/CHRNA7) nicotinic acetylcholine receptor (nAChR) and inhibits acetylcholine from binding to the receptor, thereby impairing neuromuscular and neuronal transmission. The protein is Long neurotoxin OH-5 of Ophiophagus hannah (King cobra).